Reading from the N-terminus, the 121-residue chain is Large ribosomal subunit protein uL18 (121 aa).

The protein belongs to the universal ribosomal protein uL18 family. As to quaternary structure, part of the 50S ribosomal subunit; part of the 5S rRNA/L5/L18/L25 subcomplex. Contacts the 5S and 23S rRNAs.

Functionally, this is one of the proteins that bind and probably mediate the attachment of the 5S RNA into the large ribosomal subunit, where it forms part of the central protuberance. This Streptococcus thermophilus (strain CNRZ 1066) protein is Large ribosomal subunit protein uL18.